Reading from the N-terminus, the 103-residue chain is Large ribosomal subunit protein uL24 (103 aa).

The protein belongs to the universal ribosomal protein uL24 family. In terms of assembly, part of the 50S ribosomal subunit.

Its function is as follows. One of two assembly initiator proteins, it binds directly to the 5'-end of the 23S rRNA, where it nucleates assembly of the 50S subunit. One of the proteins that surrounds the polypeptide exit tunnel on the outside of the subunit. The sequence is that of Large ribosomal subunit protein uL24 from Geobacillus sp. (strain WCH70).